A 706-amino-acid polypeptide reads, in one-letter code: Phenylalanine--tRNA ligase beta subunit, chloroplastic (706 aa).

The B5 domain occupies 300–388 (KVLKPIVLNY…RLHGFNNFLT (89 aa)). The Mg(2+) site is built by Asp366, Asp372, Glu375, and Glu376. The FDX-ACB domain occupies 612–705 (SVYPKIVKDL…LELKVQAILR (94 aa)).

The protein belongs to the phenylalanyl-tRNA synthetase beta subunit family. Type 1 subfamily. Tetramer of two alpha and two beta subunits. It depends on Mg(2+) as a cofactor.

The protein resides in the plastid. The protein localises to the chloroplast. The catalysed reaction is tRNA(Phe) + L-phenylalanine + ATP = L-phenylalanyl-tRNA(Phe) + AMP + diphosphate + H(+). This is Phenylalanine--tRNA ligase beta subunit, chloroplastic from Phaeodactylum tricornutum (strain CCAP 1055/1).